The following is a 284-amino-acid chain: MEMO1 family protein M1425_2054 (284 aa).

This sequence belongs to the MEMO1 family.

The chain is MEMO1 family protein M1425_2054 from Saccharolobus islandicus (strain M.14.25 / Kamchatka #1) (Sulfolobus islandicus).